The primary structure comprises 51 residues: U-Asilidin(1)-Mar1a (51 aa).

The first 23 residues, 1 to 23, serve as a signal peptide directing secretion; that stretch reads MANYIEVFSVLAIIFATVLAALA. 3 disulfide bridges follow: Cys-26–Cys-40, Cys-33–Cys-44, and Cys-39–Cys-49.

Belongs to the asilidin-1 family. In terms of tissue distribution, expressed by the venom gland. Is the most highly expressed peptide and is around 3000 times higher expressed in the thoracic glands compared to its body tissues.

Its subcellular location is the secreted. In terms of biological role, induces neurotoxic effect on honeybees, including slow movements, disorientation and paralysis. Since it provokes similar symptoms than omega-atracotoxin, it is probable that it acts in the same way by inhibiting voltage-gated calcium channels. In Machimus arthriticus (Breck robberfly), this protein is U-Asilidin(1)-Mar1a.